The chain runs to 312 residues: Protein-methionine-sulfoxide reductase catalytic subunit MsrP (312 aa).

The segment at residues 1–47 (MLIRRPPDLLPSEITPEPLARGRRALLKGLGAGAALAGLGLPQISQA) is a signal peptide (tat-type signal). Mo-molybdopterin-binding positions include N74, 77–78 (YE), C133, T168, N216, R221, and 232–234 (SAK).

It belongs to the MsrP family. In terms of assembly, heterodimer of a catalytic subunit (MsrP) and a heme-binding subunit (MsrQ). Requires Mo-molybdopterin as cofactor. Predicted to be exported by the Tat system. The position of the signal peptide cleavage has not been experimentally proven.

It is found in the periplasm. It catalyses the reaction L-methionyl-[protein] + a quinone + H2O = L-methionyl-(R)-S-oxide-[protein] + a quinol. In terms of biological role, part of the MsrPQ system that repairs oxidized periplasmic proteins containing methionine sulfoxide residues (Met-O), using respiratory chain electrons. Thus protects these proteins from oxidative-stress damage caused by reactive species of oxygen and chlorine generated by the host defense mechanisms. MsrPQ is essential for the maintenance of envelope integrity under bleach stress, rescuing a wide series of structurally unrelated periplasmic proteins from methionine oxidation. The catalytic subunit MsrP is non-stereospecific, being able to reduce both (R-) and (S-) diastereoisomers of methionine sulfoxide. Involved in protection against reactive chlorine species (RCS) generated by chlorite and hypochlorite. The sequence is that of Protein-methionine-sulfoxide reductase catalytic subunit MsrP from Azospira oryzae (strain ATCC BAA-33 / DSM 13638 / PS) (Dechlorosoma suillum).